The sequence spans 227 residues: Charged multivesicular body protein 4b (227 aa).

Disordered regions lie at residues 1–26 (MSGI…SPQE) and 186–227 (SGPE…AGNM). Positions 9-20 (FGAGAGGKGAGK) are enriched in gly residues. Positions 25–185 (QEAIQRLRDT…EELDKNLLEI (161 aa)) form a coiled coil.

It belongs to the SNF7 family. Probable core component of the endosomal sorting required for transport complex III (ESCRT-III). ESCRT-III components are thought to multimerize to form a flat lattice on the perimeter membrane of the endosome.

The protein localises to the cytoplasm. It localises to the cytosol. It is found in the late endosome membrane. Its subcellular location is the midbody. Functionally, probable core component of the endosomal sorting required for transport complex III (ESCRT-III) which is involved in multivesicular bodies (MVBs) formation and sorting of endosomal cargo proteins into MVBs. MVBs contain intraluminal vesicles (ILVs) that are generated by invagination and scission from the limiting membrane of the endosome and mostly are delivered to lysosomes enabling degradation of membrane proteins, such as stimulated growth factor receptors, lysosomal enzymes and lipids. The polypeptide is Charged multivesicular body protein 4b (CHMP4B) (Gallus gallus (Chicken)).